Reading from the N-terminus, the 344-residue chain is Ferredoxin--NADP reductase (344 aa).

Residues Ser-12, Asp-31, Lys-39, Tyr-43, Val-83, Ile-118, Asp-285, and Ser-326 each coordinate FAD.

Belongs to the ferredoxin--NADP reductase type 2 family. As to quaternary structure, homodimer. The cofactor is FAD.

It carries out the reaction 2 reduced [2Fe-2S]-[ferredoxin] + NADP(+) + H(+) = 2 oxidized [2Fe-2S]-[ferredoxin] + NADPH. This chain is Ferredoxin--NADP reductase, found in Staphylococcus aureus (strain MW2).